A 63-amino-acid polypeptide reads, in one-letter code: Large ribosomal subunit protein uL30 (63 aa).

It belongs to the universal ribosomal protein uL30 family. Part of the 50S ribosomal subunit.

The protein is Large ribosomal subunit protein uL30 of Rickettsia akari (strain Hartford).